A 622-amino-acid chain; its full sequence is Intermediate filament protein ifc-2 (622 aa).

Residues 19–54 (SGTYASGFGQLVSGMSSAGAICTTQIRDAREREKRE) form a head region. The IF rod domain maps to 51-399 (EKREIGLLND…ILLNGANVTT (349 aa)). A coil 1A region spans residues 55–86 (IGLLNDRLADYIEKVRFLEAQNRCLSHDIDIL). The interval 87 to 99 (RNGFSGGGHVSGL) is linker 1. The coil 1B stretch occupies residues 100–237 (FDAEINQAKH…TENNVRIEQE (138 aa)). Positions 238-255 (LVFIRRDTTADNRDYFRH) are linker 12. Residues 256–399 (ELQAAIRDIR…ILLNGANVTT (144 aa)) form a coil 2 region. Residues 400-550 (YTSNTHGSGS…RVDVGGFRIE (151 aa)) form a tail region. The region spanning 509-622 (SGRHFHSWYL…EERAWFVYLD (114 aa)) is the LTD domain.

The protein belongs to the intermediate filament family. In terms of tissue distribution, expressed in intestinal cells and at desmosomes in intestine and pharynx of the larva.

It is found in the cytoplasm. Its function is as follows. Cytoplasmic intermediate filaments provide mechanical strength to cells. Not essential protein, although its absence leads to mild defects in locomotion. The sequence is that of Intermediate filament protein ifc-2 (ifc-2) from Caenorhabditis elegans.